Reading from the N-terminus, the 114-residue chain is Small ribosomal subunit protein uS15 (114 aa).

It belongs to the universal ribosomal protein uS15 family.

The protein is Small ribosomal subunit protein uS15 (RpS13) of Musca domestica (House fly).